The primary structure comprises 168 residues: uncharacterized protein (168 aa).

2 helical membrane-spanning segments follow: residues leucine 41 to isoleucine 61 and lysine 133 to leucine 153.

Its subcellular location is the cell membrane. This is an uncharacterized protein from Thermotoga maritima (strain ATCC 43589 / DSM 3109 / JCM 10099 / NBRC 100826 / MSB8).